The following is a 176-amino-acid chain: Large ribosomal subunit protein uL16 (176 aa).

Belongs to the universal ribosomal protein uL16 family.

The sequence is that of Large ribosomal subunit protein uL16 from Picrophilus torridus (strain ATCC 700027 / DSM 9790 / JCM 10055 / NBRC 100828 / KAW 2/3).